We begin with the raw amino-acid sequence, 165 residues long: Protein SprT (165 aa).

Positions 10–158 (EACYRQAEHF…CRRCKATLVF (149 aa)) constitute a SprT-like domain. A Zn(2+)-binding site is contributed by H69. E70 is a catalytic residue. H73 lines the Zn(2+) pocket.

This sequence belongs to the SprT family. The cofactor is Zn(2+).

The protein localises to the cytoplasm. This is Protein SprT from Pseudomonas aeruginosa (strain LESB58).